A 249-amino-acid polypeptide reads, in one-letter code: DNA polymerase sliding clamp 3 (249 aa).

Belongs to the PCNA family. Homotrimer. The subunits circularize to form a toroid; DNA passes through its center. Replication factor C (RFC) is required to load the toroid on the DNA.

Its function is as follows. Sliding clamp subunit that acts as a moving platform for DNA processing. Responsible for tethering the catalytic subunit of DNA polymerase and other proteins to DNA during high-speed replication. The polypeptide is DNA polymerase sliding clamp 3 (Aeropyrum pernix (strain ATCC 700893 / DSM 11879 / JCM 9820 / NBRC 100138 / K1)).